The primary structure comprises 382 residues: Succinate--CoA ligase [ADP-forming] subunit beta (382 aa).

An ATP-grasp domain is found at 9–236 (KEVFADAGIP…DAAEDDLEAK (228 aa)). ATP is bound by residues Lys-45, 52-54 (GRG), Glu-91, Val-94, and Glu-99. The Mg(2+) site is built by Asn-191 and Asp-205. Substrate-binding positions include Asn-256 and 313–315 (GIT).

Belongs to the succinate/malate CoA ligase beta subunit family. As to quaternary structure, heterotetramer of two alpha and two beta subunits. Mg(2+) serves as cofactor.

The enzyme catalyses succinate + ATP + CoA = succinyl-CoA + ADP + phosphate. The catalysed reaction is GTP + succinate + CoA = succinyl-CoA + GDP + phosphate. It functions in the pathway carbohydrate metabolism; tricarboxylic acid cycle; succinate from succinyl-CoA (ligase route): step 1/1. Succinyl-CoA synthetase functions in the citric acid cycle (TCA), coupling the hydrolysis of succinyl-CoA to the synthesis of either ATP or GTP and thus represents the only step of substrate-level phosphorylation in the TCA. The beta subunit provides nucleotide specificity of the enzyme and binds the substrate succinate, while the binding sites for coenzyme A and phosphate are found in the alpha subunit. The chain is Succinate--CoA ligase [ADP-forming] subunit beta from Halobacterium salinarum (strain ATCC 29341 / DSM 671 / R1).